We begin with the raw amino-acid sequence, 203 residues long: B-cell CLL/lymphoma 7 protein family member B-A (203 aa).

2 disordered regions span residues 55-80 and 94-148; these read KEKEKSKVSVGGEMQRKNFPSEESSD and SNQS…EIME. Residues 109–129 are compositionally biased toward low complexity; it reads ADSSNNSSPPASEPVSPAPQS.

It belongs to the BCL7 family.

This is B-cell CLL/lymphoma 7 protein family member B-A (bcl7ba) from Danio rerio (Zebrafish).